The primary structure comprises 425 residues: Putative integrase/recombinase y4rF (425 aa).

One can recognise a Core-binding (CB) domain in the interval 123–210 (DPDALLLASF…HIRTFLRFLC (88 aa)). The 186-residue stretch at 233-418 (HLPPRLAWGD…AASQLAEVAL (186 aa)) folds into the Tyr recombinase domain. Active-site residues include Arg-273, Lys-298, His-370, Arg-373, and His-396. Tyr-405 acts as the O-(3'-phospho-DNA)-tyrosine intermediate in catalysis.

Belongs to the 'phage' integrase family.

This Sinorhizobium fredii (strain NBRC 101917 / NGR234) protein is Putative integrase/recombinase y4rF.